The chain runs to 302 residues: Aspartate carbamoyltransferase catalytic subunit (302 aa).

Carbamoyl phosphate-binding residues include R53 and T54. K82 is an L-aspartate binding site. The carbamoyl phosphate site is built by R103, H131, and Q134. L-aspartate is bound by residues R164 and R223. Carbamoyl phosphate is bound by residues L260 and P261.

It belongs to the aspartate/ornithine carbamoyltransferase superfamily. ATCase family. Heterooligomer of catalytic and regulatory chains.

It catalyses the reaction carbamoyl phosphate + L-aspartate = N-carbamoyl-L-aspartate + phosphate + H(+). It functions in the pathway pyrimidine metabolism; UMP biosynthesis via de novo pathway; (S)-dihydroorotate from bicarbonate: step 2/3. Catalyzes the condensation of carbamoyl phosphate and aspartate to form carbamoyl aspartate and inorganic phosphate, the committed step in the de novo pyrimidine nucleotide biosynthesis pathway. The sequence is that of Aspartate carbamoyltransferase catalytic subunit from Methanococcus maripaludis (strain C6 / ATCC BAA-1332).